The chain runs to 331 residues: Glyceraldehyde-3-phosphate dehydrogenase (331 aa).

Residues 12–13, Asp34, Arg78, and Thr120 each bind NAD(+); that span reads RI. Residues 149-151, Thr180, 209-210, and Arg232 contribute to the D-glyceraldehyde 3-phosphate site; these read SCT and TG. Catalysis depends on Cys150, which acts as the Nucleophile. Asn314 lines the NAD(+) pocket.

Belongs to the glyceraldehyde-3-phosphate dehydrogenase family. Homotetramer.

Its subcellular location is the cytoplasm. The enzyme catalyses D-glyceraldehyde 3-phosphate + phosphate + NAD(+) = (2R)-3-phospho-glyceroyl phosphate + NADH + H(+). It functions in the pathway carbohydrate degradation; glycolysis; pyruvate from D-glyceraldehyde 3-phosphate: step 1/5. In terms of biological role, catalyzes the oxidative phosphorylation of glyceraldehyde 3-phosphate (G3P) to 1,3-bisphosphoglycerate (BPG) using the cofactor NAD. The first reaction step involves the formation of a hemiacetal intermediate between G3P and a cysteine residue, and this hemiacetal intermediate is then oxidized to a thioester, with concomitant reduction of NAD to NADH. The reduced NADH is then exchanged with the second NAD, and the thioester is attacked by a nucleophilic inorganic phosphate to produce BPG. This Escherichia fergusonii (strain ATCC 35469 / DSM 13698 / CCUG 18766 / IAM 14443 / JCM 21226 / LMG 7866 / NBRC 102419 / NCTC 12128 / CDC 0568-73) protein is Glyceraldehyde-3-phosphate dehydrogenase (gapA).